The following is a 496-amino-acid chain: Glutamyl-tRNA(Gln) amidotransferase subunit A (496 aa).

Residues lysine 75 and serine 150 each act as charge relay system in the active site. Residue serine 174 is the Acyl-ester intermediate of the active site.

The protein belongs to the amidase family. GatA subfamily. In terms of assembly, heterotrimer of A, B and C subunits.

It catalyses the reaction L-glutamyl-tRNA(Gln) + L-glutamine + ATP + H2O = L-glutaminyl-tRNA(Gln) + L-glutamate + ADP + phosphate + H(+). Allows the formation of correctly charged Gln-tRNA(Gln) through the transamidation of misacylated Glu-tRNA(Gln) in organisms which lack glutaminyl-tRNA synthetase. The reaction takes place in the presence of glutamine and ATP through an activated gamma-phospho-Glu-tRNA(Gln). The chain is Glutamyl-tRNA(Gln) amidotransferase subunit A from Burkholderia lata (strain ATCC 17760 / DSM 23089 / LMG 22485 / NCIMB 9086 / R18194 / 383).